The sequence spans 842 residues: Elongation factor 2 (842 aa).

In terms of domain architecture, tr-type G spans 17–253 (TNVRNMSVIA…LWGDSYFNPK (237 aa)). GTP contacts are provided by residues 26 to 33 (AHVDHGKS), 158 to 161 (NKVD), and 213 to 215 (SGL). H699 is subject to Diphthamide.

The protein belongs to the TRAFAC class translation factor GTPase superfamily. Classic translation factor GTPase family. EF-G/EF-2 subfamily.

The protein localises to the cytoplasm. It carries out the reaction GTP + H2O = GDP + phosphate + H(+). Catalyzes the GTP-dependent ribosomal translocation step during translation elongation. During this step, the ribosome changes from the pre-translocational (PRE) to the post-translocational (POST) state as the newly formed A-site-bound peptidyl-tRNA and P-site-bound deacylated tRNA move to the P and E sites, respectively. Catalyzes the coordinated movement of the two tRNA molecules, the mRNA and conformational changes in the ribosome. The protein is Elongation factor 2 (EFT1) of Naumovozyma castellii (Yeast).